The primary structure comprises 319 residues: CD2 antigen cytoplasmic tail-binding protein 2 homolog (319 aa).

Disordered stretches follow at residues methionine 1–valine 57 and asparagine 105–proline 124. A compositionally biased stretch (basic and acidic residues) spans lysine 12–aspartate 24. Residues serine 25 and serine 30 each carry the phosphoserine modification. The segment covering serine 25–glutamate 47 has biased composition (acidic residues). A Phosphotyrosine modification is found at tyrosine 37. Residue serine 41 is modified to Phosphoserine. Over residues proline 109 to proline 124 the composition is skewed to basic and acidic residues. A GYF domain is found at glutamate 260 to aspartate 316.

The protein resides in the nucleus. In terms of biological role, required for embryonic epithelial tissue repair, but not for the assembly of the actomyosin cable at the wound edge. Probably acts downstream of rl in the regulation of Ddc and msn transcription to promote wound healing. In Drosophila melanogaster (Fruit fly), this protein is CD2 antigen cytoplasmic tail-binding protein 2 homolog (holn1).